A 766-amino-acid polypeptide reads, in one-letter code: Protein zer-1 homolog (766 aa).

Ala-2 is modified (N-acetylalanine). LRR repeat units lie at residues 226–245 (SLVL…IVQL), 246–268 (HKLR…KLTR), and 278–302 (LGNL…KMEE). ARM repeat units follow at residues 427-467 (RSEQ…NFSI), 511-556 (DNDH…NITD), 558-600 (TPDN…NVAE), 602-643 (KELR…HIMF), and 714-756 (PDKY…HCSN).

This sequence belongs to the zyg-11 family. Interacts with the ELOC-ELOB/Elongin BC complex. Part of an E3 ubiquitin ligase complex including ZER1, CUL2 and Elongin BC. In terms of tissue distribution, expressed in testis, spermatocytes and spermatids (at protein level). Expressed in spermatocytes, spermatids, prostate, skeletal muscle, ovary, small intestine, heart, brain and pancreas.

In terms of biological role, serves as substrate adapter subunit in the E3 ubiquitin ligase complex ZYG11B-CUL2-Elongin BC. Acts to target substrates bearing N-terminal degrons for proteasomal degradation with the first four residues of substrates being the key recognition elements. Involved in the clearance of proteolytic fragments generated by caspase cleavage during apoptosis since N-terminal glycine degrons are strongly enriched at caspase cleavage sites. Also important in the quality control of protein N-myristoylation in which N-terminal glycine degrons are conditionally exposed after a failure of N-myristoylation. In Homo sapiens (Human), this protein is Protein zer-1 homolog.